Reading from the N-terminus, the 139-residue chain is Small ribosomal subunit protein bS6 (139 aa).

The disordered stretch occupies residues 120-139 (KGASKVETPTGPESTDIQEK). Positions 130–139 (GPESTDIQEK) are enriched in polar residues.

It belongs to the bacterial ribosomal protein bS6 family.

Functionally, binds together with bS18 to 16S ribosomal RNA. This chain is Small ribosomal subunit protein bS6 (rpsF), found in Borreliella burgdorferi (strain ATCC 35210 / DSM 4680 / CIP 102532 / B31) (Borrelia burgdorferi).